We begin with the raw amino-acid sequence, 1365 residues long: Serine-aspartate repeat-containing protein D (1365 aa).

A signal peptide spans 1–35 (MLNRENKTAITRKGMVSNRLNKFSIRKYTVGTASI). The YSIRK-G/S signaling motif motif lies at 23–34 (FSIRKYTVGTAS). The segment at 36-568 (LVGTTLIFGL…NNQSGGAGQE (533 aa)) is ligand binding A region. A disordered region spans residues 54-185 (ESTNKELNEA…NKKVDAKTES (132 aa)). Composition is skewed to polar residues over residues 62–71 (EATTSASDNQ) and 94–109 (EMVS…NGNK). Positions 130-145 (KSDEQASPKSTNEDLN) are enriched in basic and acidic residues. Polar residues-rich tracts occupy residues 146 to 155 (TKQTISNQEA) and 163 to 173 (NKSVVNAQPTN). The span at 174–183 (EENKKVDAKT) shows a compositional bias: basic and acidic residues. CNA-B domains are found at residues 569 to 680 (VYKI…IYKP), 681 to 791 (KYNL…YKTP), 792 to 901 (KYNL…FYKP), 902 to 1012 (TYNL…YKTP), and 1013 to 1123 (KYSL…EEDT). Disordered stretches follow at residues 857–884 (ETPS…STTG), 972–991 (YTPT…NGLT), and 1078–1341 (EKPA…SNNA). Composition is skewed to polar residues over residues 860–869 (SGYTPTQVGS) and 972–981 (YTPTSVTSGN). Acidic residues-rich tracts occupy residues 1091 to 1101 (TEDDKDADGGE) and 1118 to 1304 (YFEE…DSDS). Positions 1328–1332 (LPETG) match the LPXTG sorting signal motif. A Pentaglycyl murein peptidoglycan amidated threonine modification is found at Thr-1331. A propeptide spans 1332–1365 (GNENSGSNNATLFGGLFAALGSLLLFGRRKKQNK) (removed by sortase).

Belongs to the serine-aspartate repeat-containing protein (SDr) family. Interacts with host DSG1; this interaction increases S.aureus adherence to keratinocytes.

Its subcellular location is the secreted. It localises to the cell wall. Cell surface-associated calcium-binding protein which plays an important role in adhesion and pathogenesis. Mediates interactions with components of the extracellular matrix such as host DSG1 to promote bacterial adhesion to host cells. Contributes to the resistance to killing by innate immune components such as neutrophils present in blood and thus attenuates bacterial clearance. This chain is Serine-aspartate repeat-containing protein D (sdrD), found in Staphylococcus aureus (strain MSSA476).